Reading from the N-terminus, the 165-residue chain is Protein SprT (165 aa).

The region spanning 20–163 (ENLAQANLKL…RCVHCGEPLV (144 aa)) is the SprT-like domain. His78 serves as a coordination point for Zn(2+). Glu79 is an active-site residue. Residue His82 coordinates Zn(2+).

This sequence belongs to the SprT family. Requires Zn(2+) as cofactor.

The protein localises to the cytoplasm. This chain is Protein SprT, found in Salmonella arizonae (strain ATCC BAA-731 / CDC346-86 / RSK2980).